A 277-amino-acid polypeptide reads, in one-letter code: General transcription factor IIF subunit 2 (277 aa).

It belongs to the TFIIF beta subunit family. As to quaternary structure, heterodimer of an alpha and a beta subunit.

The protein localises to the nucleus. TFIIF is a general transcription initiation factor that binds to RNA polymerase II and helps to recruit it to the initiation complex in collaboration with TFIIB. The protein is General transcription factor IIF subunit 2 (TfIIFbeta) of Drosophila melanogaster (Fruit fly).